The sequence spans 268 residues: Tryptophan synthase alpha chain (268 aa).

Catalysis depends on proton acceptor residues Glu49 and Asp60.

This sequence belongs to the TrpA family. As to quaternary structure, tetramer of two alpha and two beta chains.

The catalysed reaction is (1S,2R)-1-C-(indol-3-yl)glycerol 3-phosphate + L-serine = D-glyceraldehyde 3-phosphate + L-tryptophan + H2O. It functions in the pathway amino-acid biosynthesis; L-tryptophan biosynthesis; L-tryptophan from chorismate: step 5/5. The alpha subunit is responsible for the aldol cleavage of indoleglycerol phosphate to indole and glyceraldehyde 3-phosphate. The sequence is that of Tryptophan synthase alpha chain from Escherichia coli (strain ATCC 8739 / DSM 1576 / NBRC 3972 / NCIMB 8545 / WDCM 00012 / Crooks).